We begin with the raw amino-acid sequence, 108 residues long: UPF0145 protein Tmel_1129 (108 aa).

This sequence belongs to the UPF0145 family.

The protein is UPF0145 protein Tmel_1129 of Thermosipho melanesiensis (strain DSM 12029 / CIP 104789 / BI429).